Reading from the N-terminus, the 399-residue chain is Glucose-1-phosphate adenylyltransferase (399 aa).

Alpha-D-glucose 1-phosphate-binding positions include Gly-158, 174–175 (EK), and Ser-192.

Belongs to the bacterial/plant glucose-1-phosphate adenylyltransferase family. Homotetramer.

It carries out the reaction alpha-D-glucose 1-phosphate + ATP + H(+) = ADP-alpha-D-glucose + diphosphate. The protein operates within glycan biosynthesis; glycogen biosynthesis. Its function is as follows. Involved in the biosynthesis of ADP-glucose, a building block required for the elongation reactions to produce glycogen. Catalyzes the reaction between ATP and alpha-D-glucose 1-phosphate (G1P) to produce pyrophosphate and ADP-Glc. The polypeptide is Glucose-1-phosphate adenylyltransferase (Streptomyces coelicolor (strain ATCC BAA-471 / A3(2) / M145)).